A 275-amino-acid polypeptide reads, in one-letter code: L-aspartate dehydrogenase (275 aa).

2 residues coordinate NAD(+): Ala130 and Asn196. His226 is a catalytic residue.

The protein belongs to the L-aspartate dehydrogenase family.

The enzyme catalyses L-aspartate + NADP(+) + H2O = oxaloacetate + NH4(+) + NADPH + H(+). The catalysed reaction is L-aspartate + NAD(+) + H2O = oxaloacetate + NH4(+) + NADH + H(+). The protein operates within cofactor biosynthesis; NAD(+) biosynthesis; iminoaspartate from L-aspartate (dehydrogenase route): step 1/1. Its function is as follows. Specifically catalyzes the NAD or NADP-dependent dehydrogenation of L-aspartate to iminoaspartate. The polypeptide is L-aspartate dehydrogenase (Ruegeria pomeroyi (strain ATCC 700808 / DSM 15171 / DSS-3) (Silicibacter pomeroyi)).